A 293-amino-acid polypeptide reads, in one-letter code: MELKITKEKVTNSLELLGFQPKNIDLWFELIKELFSFYKYSEPISTFLGKCKAHNNNISKVMSSYNNYSYYKITSYKNFNKKDSFMVKFIEFYMQNNINIILDAFDFVHPNNWYYEKTNNTNVLHYIESHMINQLFCTICIIYLSEKTDRYVKKAFIGTISNYLNNKYYRKRQTSIKNHKVITEYMIKYLDPFFSNNTDQINEFMNDNDVGVCFHKCVANKRTLSNNPFLYSQDSYTHWAPLVVLLARNDITNELASFDIEDRINNKALEIICLNDSELTDTTQSSKKIVLNI.

This is an uncharacterized protein from Acanthamoeba polyphaga (Amoeba).